A 498-amino-acid polypeptide reads, in one-letter code: Protein MGF 505-5R (498 aa).

The protein belongs to the asfivirus MGF 505 family.

In terms of biological role, plays a role in virus cell tropism, and may be required for efficient virus replication in macrophages. The polypeptide is Protein MGF 505-5R (Ornithodoros (relapsing fever ticks)).